The following is a 247-amino-acid chain: uncharacterized protein (247 aa).

This is an uncharacterized protein from Schizosaccharomyces pombe (strain 972 / ATCC 24843) (Fission yeast).